We begin with the raw amino-acid sequence, 263 residues long: Putative hydro-lyase GK2103 (263 aa).

Belongs to the D-glutamate cyclase family.

In Geobacillus kaustophilus (strain HTA426), this protein is Putative hydro-lyase GK2103.